A 718-amino-acid polypeptide reads, in one-letter code: Nucleolar protein 11 (718 aa).

N6-methyllysine is present on Lys-346.

Interacts with UTP4. Interacts with FBL/fibrillarin in a transcription-dependent manner. May associate with the proposed t-UTP subcomplex of the SSU processome containing at least UTP4, WDR43, HEATR1, UTP15, WDR75.

It is found in the nucleus. Its subcellular location is the nucleolus. Functionally, ribosome biogenesis factor. May be required for both optimal rDNA transcription and small subunit (SSU) pre-rRNA processing at sites A', A0, 1 and 2b. This chain is Nucleolar protein 11 (NOL11), found in Pongo abelii (Sumatran orangutan).